Here is a 400-residue protein sequence, read N- to C-terminus: Enoyl-[acyl-carrier-protein] reductase [NADH] (400 aa).

Residues 48-53 (GSSSGY), 74-75 (FE), 111-112 (DA), and 139-140 (LA) contribute to the NAD(+) site. Residue tyrosine 225 coordinates substrate. The active-site Proton donor is tyrosine 235. NAD(+)-binding positions include lysine 244 and 273 to 275 (VVT).

Belongs to the TER reductase family. As to quaternary structure, monomer.

It carries out the reaction a 2,3-saturated acyl-[ACP] + NAD(+) = a (2E)-enoyl-[ACP] + NADH + H(+). It functions in the pathway lipid metabolism; fatty acid biosynthesis. Functionally, involved in the final reduction of the elongation cycle of fatty acid synthesis (FAS II). Catalyzes the reduction of a carbon-carbon double bond in an enoyl moiety that is covalently linked to an acyl carrier protein (ACP). In Shewanella loihica (strain ATCC BAA-1088 / PV-4), this protein is Enoyl-[acyl-carrier-protein] reductase [NADH].